The following is a 596-amino-acid chain: Elongation factor 4 (596 aa).

The 183-residue stretch at 2–184 folds into the tr-type G domain; sequence KHIRNFSIIA…TIVAQIPSPE (183 aa). GTP is bound by residues 14–19 and 131–134; these read DHGKST and NKID.

This sequence belongs to the TRAFAC class translation factor GTPase superfamily. Classic translation factor GTPase family. LepA subfamily.

It is found in the cell inner membrane. The catalysed reaction is GTP + H2O = GDP + phosphate + H(+). Functionally, required for accurate and efficient protein synthesis under certain stress conditions. May act as a fidelity factor of the translation reaction, by catalyzing a one-codon backward translocation of tRNAs on improperly translocated ribosomes. Back-translocation proceeds from a post-translocation (POST) complex to a pre-translocation (PRE) complex, thus giving elongation factor G a second chance to translocate the tRNAs correctly. Binds to ribosomes in a GTP-dependent manner. The polypeptide is Elongation factor 4 (Shewanella amazonensis (strain ATCC BAA-1098 / SB2B)).